Reading from the N-terminus, the 286-residue chain is Putative sugar uptake protein lin0215 (286 aa).

A run of 8 helical transmembrane segments spans residues 4–26, 33–55, 114–136, 149–167, 177–194, 207–226, 230–252, and 264–283; these read MIAL…FGGS, GMTL…VYTL, LRII…TSYA, GLIT…VVLI, AILP…IMTH, LLLI…MVHA, VGVA…GGIV, and LYVI…IGVA.

The protein belongs to the GRP transporter (TC 2.A.7.5) family.

The protein localises to the cell membrane. The polypeptide is Putative sugar uptake protein lin0215 (Listeria innocua serovar 6a (strain ATCC BAA-680 / CLIP 11262)).